We begin with the raw amino-acid sequence, 130 residues long: Small ribosomal subunit protein uS11 (130 aa).

It belongs to the universal ribosomal protein uS11 family. Part of the 30S ribosomal subunit. Interacts with proteins S7 and S18. Binds to IF-3.

Functionally, located on the platform of the 30S subunit, it bridges several disparate RNA helices of the 16S rRNA. Forms part of the Shine-Dalgarno cleft in the 70S ribosome. This Psychrobacter sp. (strain PRwf-1) protein is Small ribosomal subunit protein uS11.